Here is a 950-residue protein sequence, read N- to C-terminus: Leucine--tRNA ligase (950 aa).

A 'HIGH' region motif is present at residues 72–83 (PYPSGEGLHVGH). Residues 722–726 (KIGKS) carry the 'KMSKS' region motif. Lys725 contributes to the ATP binding site.

The protein belongs to the class-I aminoacyl-tRNA synthetase family.

Its subcellular location is the cytoplasm. The enzyme catalyses tRNA(Leu) + L-leucine + ATP = L-leucyl-tRNA(Leu) + AMP + diphosphate. This is Leucine--tRNA ligase from Mycobacterium sp. (strain KMS).